The primary structure comprises 235 residues: Sugar fermentation stimulation protein homolog (235 aa).

The protein belongs to the SfsA family.

The protein is Sugar fermentation stimulation protein homolog of Pseudomonas aeruginosa (strain ATCC 15692 / DSM 22644 / CIP 104116 / JCM 14847 / LMG 12228 / 1C / PRS 101 / PAO1).